Consider the following 500-residue polypeptide: Glycerol kinase (500 aa).

Residue threonine 12 participates in ADP binding. Residues threonine 12, threonine 13, and serine 14 each contribute to the ATP site. Threonine 12 contacts sn-glycerol 3-phosphate. Residue arginine 16 participates in ADP binding. Sn-glycerol 3-phosphate is bound by residues arginine 82, glutamate 83, tyrosine 134, and aspartate 244. Residues arginine 82, glutamate 83, tyrosine 134, aspartate 244, and glutamine 245 each coordinate glycerol. Residues threonine 266 and glycine 309 each coordinate ADP. Residues threonine 266, glycine 309, glutamine 313, and glycine 410 each contribute to the ATP site. Residues glycine 410 and asparagine 414 each coordinate ADP.

It belongs to the FGGY kinase family. In terms of assembly, homotetramer and homodimer (in equilibrium).

The catalysed reaction is glycerol + ATP = sn-glycerol 3-phosphate + ADP + H(+). It functions in the pathway polyol metabolism; glycerol degradation via glycerol kinase pathway; sn-glycerol 3-phosphate from glycerol: step 1/1. Activated by phosphorylation and inhibited by fructose 1,6-bisphosphate (FBP). Key enzyme in the regulation of glycerol uptake and metabolism. Catalyzes the phosphorylation of glycerol to yield sn-glycerol 3-phosphate. The chain is Glycerol kinase from Alkaliphilus metalliredigens (strain QYMF).